The chain runs to 417 residues: N-acetylmuramoyl-L-alanine amidase AmiC (417 aa).

Residues 1–31 (MSGSNTAISRRRLLQGAGAMWLLSVSQVSLA) constitute a signal peptide (tat-type signal). A disordered region spans residues 166–185 (LEKQVPPAQSGPQPGKAGRD). The MurNAc-LAA domain occupies 190–404 (IMLDPGHGGE…VAESILAGIK (215 aa)).

It belongs to the N-acetylmuramoyl-L-alanine amidase 3 family. Post-translationally, predicted to be exported by the Tat system. The position of the signal peptide cleavage has not been experimentally proven.

The protein resides in the periplasm. The catalysed reaction is Hydrolyzes the link between N-acetylmuramoyl residues and L-amino acid residues in certain cell-wall glycopeptides.. Its function is as follows. Cell-wall hydrolase involved in septum cleavage during cell division. The protein is N-acetylmuramoyl-L-alanine amidase AmiC (amiC) of Escherichia coli O6:H1 (strain CFT073 / ATCC 700928 / UPEC).